We begin with the raw amino-acid sequence, 353 residues long: Polyprenal reductase 2 (353 aa).

The next 6 helical transmembrane spans lie at 11-31, 78-98, 175-195, 234-254, 291-308, and 313-335; these read PLLCFAWIAATLPIIAAALPI, FMHFYVVGVLATTILLLAIWF, MHIVGYLTGLFYYVAAPLSLA, PLLKLGWTQWIGAVIFIWGSL, YLAELVIYFGMLVASGAE, and WFLFIFLITNLSFAAVETYNWYL.

Belongs to the steroid 5-alpha reductase family. Polyprenal reductase subfamily.

It localises to the cell membrane. The catalysed reaction is a di-trans,poly-cis-dolichal + NADP(+) = a di-trans,poly-cis-polyprenal + NADPH + H(+). It participates in protein modification; protein glycosylation. In terms of biological role, plays a key role in early steps of protein N-linked glycosylation by being involved in the conversion of polyprenol into dolichol. Acts as a polyprenal reductase that mediates the reduction of polyprenal into dolichal in a NADP-dependent mechanism. Dolichols are required for the synthesis of dolichol-linked monosaccharides and the oligosaccharide precursor used for N-glycosylation. This Oryza sativa subsp. indica (Rice) protein is Polyprenal reductase 2.